Here is a 179-residue protein sequence, read N- to C-terminus: MTETIKVSESLELHAVAENHVKPLYQLICKNKTWLQQSLNWPQFVQSEEDTRKTVQGNVMLHQRGYAKMFMIFKEDELIGVISFNRIEPLNKTAEIGYWLDESHQGQGIISQALQALIHHYAQSGELRRFVIKCRVDNPQSNQVALRNGFILEGCLKQAEFLNDAYDDVNLYARIIDSQ.

Positions 11-172 (LELHAVAENH…NDAYDDVNLY (162 aa)) constitute an N-acetyltransferase domain.

Belongs to the acetyltransferase family. RimL subfamily.

The protein resides in the cytoplasm. It catalyses the reaction N-terminal L-seryl-[ribosomal protein bL12] + acetyl-CoA = N-terminal N(alpha)-acetyl-L-seryl-[ribosomal protein bL12] + CoA + H(+). Functionally, this enzyme acetylates the N-terminal serine of ribosomal protein bL12, converting it into the acetylated form of bL12 known as bL7. This Escherichia coli (strain K12) protein is Ribosomal-protein-serine acetyltransferase.